A 57-amino-acid polypeptide reads, in one-letter code: Small ribosomal subunit protein eS27 (57 aa).

The Zn(2+) site is built by C10, C13, C29, and C32. The C4-type zinc finger occupies 10-32 (CPDCENEQSLFEKAASEVSCAVC).

It belongs to the eukaryotic ribosomal protein eS27 family. In terms of assembly, part of the 30S ribosomal subunit. It depends on Zn(2+) as a cofactor.

This chain is Small ribosomal subunit protein eS27, found in Haloarcula marismortui (strain ATCC 43049 / DSM 3752 / JCM 8966 / VKM B-1809) (Halobacterium marismortui).